Reading from the N-terminus, the 103-residue chain is Small ribosomal subunit protein uS10 (103 aa).

Belongs to the universal ribosomal protein uS10 family. In terms of assembly, part of the 30S ribosomal subunit.

Its function is as follows. Involved in the binding of tRNA to the ribosomes. This Campylobacter fetus subsp. fetus (strain 82-40) protein is Small ribosomal subunit protein uS10.